The chain runs to 435 residues: ATP-dependent protease ATPase subunit HslU (435 aa).

Residues isoleucine 18, glycine 60–glutamate 65, aspartate 248, glutamate 313, and arginine 385 contribute to the ATP site.

The protein belongs to the ClpX chaperone family. HslU subfamily. As to quaternary structure, a double ring-shaped homohexamer of HslV is capped on each side by a ring-shaped HslU homohexamer. The assembly of the HslU/HslV complex is dependent on binding of ATP.

It is found in the cytoplasm. ATPase subunit of a proteasome-like degradation complex; this subunit has chaperone activity. The binding of ATP and its subsequent hydrolysis by HslU are essential for unfolding of protein substrates subsequently hydrolyzed by HslV. HslU recognizes the N-terminal part of its protein substrates and unfolds these before they are guided to HslV for hydrolysis. The protein is ATP-dependent protease ATPase subunit HslU of Ruegeria pomeroyi (strain ATCC 700808 / DSM 15171 / DSS-3) (Silicibacter pomeroyi).